The following is a 401-amino-acid chain: MELPIEEIKVRKVLDSRGNFTVEADVTVPNGFGRTSAPAGASTGETEVIAFSKSGIDASIQFFESKVKRSLIGFNALDQSGFDKLLTDIDGSGNFSNLGGNLATALSMSVAKAAAQSLGIPLYRYVGGIRSTIPRPMGNVIGGGKHARNGTSIQEFLVSAQGSTFLESAYINVLVHRRIGDMLSDKFKDISIGVGDERTWSVNLSDEEAFEILNEAVKEISSEKKVKIYTGVDFAADSLYENGKYVYKHTTKSRDEQIDYAISISKDFGVYYIEDPMYDTDFDGFAEITARIGDRSLIVGDDLYTTNPDRIRKGVEKKSTNAVLIKVNQIGTLSAAREAVAVATFAGMKNIVSHRSGETTDDFLAHLSVAFGSTFVKTGVIGGERVAKLNEIARIEECLTS.

Gln-154 lines the (2R)-2-phosphoglycerate pocket. Glu-197 serves as the catalytic Proton donor. 3 residues coordinate Mg(2+): Asp-233, Glu-274, and Asp-301. (2R)-2-phosphoglycerate-binding residues include Lys-326, Arg-355, Ser-356, and Lys-377. The active-site Proton acceptor is Lys-326.

It belongs to the enolase family. The cofactor is Mg(2+).

Its subcellular location is the cytoplasm. It is found in the secreted. The protein localises to the cell surface. It catalyses the reaction (2R)-2-phosphoglycerate = phosphoenolpyruvate + H2O. It participates in carbohydrate degradation; glycolysis; pyruvate from D-glyceraldehyde 3-phosphate: step 4/5. Its function is as follows. Catalyzes the reversible conversion of 2-phosphoglycerate (2-PG) into phosphoenolpyruvate (PEP). It is essential for the degradation of carbohydrates via glycolysis. The protein is Enolase of Thermoplasma acidophilum (strain ATCC 25905 / DSM 1728 / JCM 9062 / NBRC 15155 / AMRC-C165).